We begin with the raw amino-acid sequence, 518 residues long: Protein translocase subunit SecD (518 aa).

Helical transmembrane passes span 9 to 29, 356 to 376, 377 to 397, 406 to 426, 451 to 473, and 486 to 506; these read IVLS…NFIQ, GKKA…LSYG, VIGL…LALL, LPGI…NVLI, AFAT…YIFG, and IGII…IDIW.

It belongs to the SecD/SecF family. SecD subfamily. In terms of assembly, forms a complex with SecF. Part of the essential Sec protein translocation apparatus which comprises SecA, SecYEG and auxiliary proteins SecDF-YajC and YidC.

The protein localises to the cell inner membrane. In terms of biological role, part of the Sec protein translocase complex. Interacts with the SecYEG preprotein conducting channel. SecDF uses the proton motive force (PMF) to complete protein translocation after the ATP-dependent function of SecA. The polypeptide is Protein translocase subunit SecD (Rickettsia typhi (strain ATCC VR-144 / Wilmington)).